A 64-amino-acid chain; its full sequence is Large ribosomal subunit protein bL28 (64 aa).

It belongs to the bacterial ribosomal protein bL28 family.

In Syntrophobacter fumaroxidans (strain DSM 10017 / MPOB), this protein is Large ribosomal subunit protein bL28.